Consider the following 386-residue polypeptide: Succinate--CoA ligase [ADP-forming] subunit beta (386 aa).

The ATP-grasp domain maps to 9-244; that stretch reads KDLLTAYQLP…PSQENIRDVL (236 aa). ATP is bound by residues Lys-46, 53–55, Val-102, and Glu-107; that span reads GRG. Mg(2+) contacts are provided by Asn-199 and Asp-213. Residues Asn-264 and 321–323 contribute to the substrate site; that span reads GIM.

This sequence belongs to the succinate/malate CoA ligase beta subunit family. Heterotetramer of two alpha and two beta subunits. Mg(2+) serves as cofactor.

The catalysed reaction is succinate + ATP + CoA = succinyl-CoA + ADP + phosphate. The enzyme catalyses GTP + succinate + CoA = succinyl-CoA + GDP + phosphate. Its pathway is carbohydrate metabolism; tricarboxylic acid cycle; succinate from succinyl-CoA (ligase route): step 1/1. Succinyl-CoA synthetase functions in the citric acid cycle (TCA), coupling the hydrolysis of succinyl-CoA to the synthesis of either ATP or GTP and thus represents the only step of substrate-level phosphorylation in the TCA. The beta subunit provides nucleotide specificity of the enzyme and binds the substrate succinate, while the binding sites for coenzyme A and phosphate are found in the alpha subunit. This is Succinate--CoA ligase [ADP-forming] subunit beta from Chlamydia trachomatis serovar A (strain ATCC VR-571B / DSM 19440 / HAR-13).